The sequence spans 172 residues: Thioredoxin M-type, chloroplastic (172 aa).

A chloroplast-targeting transit peptide spans 1-60 (MALESLFKSIHTKTSLSSSIVFIFKGKACLLTSKSRIQESFAELNSFTSLVLLIENHVLL). One can recognise a Thioredoxin domain in the interval 61 to 172 (HAREAVNEVQ…TLSEKVEKYI (112 aa)). Active-site nucleophile residues include Cys97 and Cys100. Cys97 and Cys100 form a disulfide bridge.

This sequence belongs to the thioredoxin family. Plant M-type subfamily. Forms a complex with heterodimeric ferredoxin-thioredoxin reductase (FTR) and ferredoxin.

It is found in the plastid. Its subcellular location is the chloroplast. Functionally, participates in various redox reactions through the reversible oxidation of the active center dithiol to a disulfide. The M form is known to activate NADP-malate dehydrogenase. In Pisum sativum (Garden pea), this protein is Thioredoxin M-type, chloroplastic.